A 254-amino-acid chain; its full sequence is 5-oxoprolinase subunit A (254 aa).

This sequence belongs to the LamB/PxpA family. In terms of assembly, forms a complex composed of PxpA, PxpB and PxpC.

The catalysed reaction is 5-oxo-L-proline + ATP + 2 H2O = L-glutamate + ADP + phosphate + H(+). Catalyzes the cleavage of 5-oxoproline to form L-glutamate coupled to the hydrolysis of ATP to ADP and inorganic phosphate. This is 5-oxoprolinase subunit A from Brevibacillus brevis (strain 47 / JCM 6285 / NBRC 100599).